Here is a 154-residue protein sequence, read N- to C-terminus: MPVSAPSPPRLHSPFIHCPINFTPSSFSARNLRSPSTSYPRIKAELDPNTVVAISVGVASVALGIGIPVFYETQIDNAAKRENTQPCFPCNGTGAQKCRLCVGSGNVTVELGGGEKEVSNCINCDGAGSLTCTTCQGSGVQPRYLDRREFKDDD.

The transit peptide at 1–43 (MPVSAPSPPRLHSPFIHCPINFTPSSFSARNLRSPSTSYPRIK) directs the protein to the chloroplast. A helical transmembrane segment spans residues 51-71 (VVAISVGVASVALGIGIPVFY). The CR-type zinc finger occupies 77 to 147 (NAAKRENTQP…SGVQPRYLDR (71 aa)). Residues C87, C90, C98, C101, C121, C124, C132, and C135 each contribute to the Zn(2+) site.

Belongs to the BSD2 chaperone family. As to quaternary structure, interacts with the photosystem II core subunits. Interacts with HHL1. Zn(2+) is required as a cofactor.

The protein resides in the plastid. It localises to the chloroplast thylakoid membrane. The catalysed reaction is Catalyzes the rearrangement of -S-S- bonds in proteins.. Its function is as follows. Protein disulfide-isomerase probably involved upon formation of a complex with HHL1 in maintaining photosystem II (PSII) activity under high light by regulating repair and reassembly of PSII complexes. The chain is Protein disulfide-isomerase LQY1, chloroplastic from Arabidopsis thaliana (Mouse-ear cress).